We begin with the raw amino-acid sequence, 475 residues long: MTVVIAGAGPTGLTLACELTRRGIACRVLDKAPDLFPGSRGKGLSPRTQEVFDDLGIAPAINSGGMAMPPFRIYAGHEVVAERSLVEMLGTDIPSGPGIPYPGFWLVPQWRTDEILLDRLRQFGGDVEFNCEVVGFTQRSDAVSVMVSQGGAPELLHASYLVGADGGRSTVRKMLGVGFAGETFERERTLIGDVRADGLEGSFCHVLTRDGQVSERFSLWNLPGSEHYQFVANMATEDVPALTLDAVQKLVVDRSGRDDIVLRDLRWISLYRVNARMVDRFRVGRVILAGDAAHVHSSAGGQGLNTSVQDAYNLGWKLAAVIYGAPEKLLDTYEEERMPVAASVLGLSTDLHHRNFAPAKGPAPQLHQMDITYRGCSLAVDDRVFQGNLRAGDRAPDALLDNGVRLFDVLRGTHFTLLTFGAQAPVIADVCIQQMTPSPDYDVTATTLVLVRPDGYIGVMTESGRTVLEYLARVV.

The protein belongs to the aromatic-ring hydroxylase family. The cofactor is FAD.

The protein localises to the cytoplasm. It catalyses the reaction a tetracycline + NADPH + O2 + H(+) = an 11a-hydroxytetracycline + NADP(+) + H2O. It carries out the reaction tetracycline + NADPH + O2 + H(+) = 11a-hydroxytetracycline + NADP(+) + H2O. Its activity is regulated as follows. Inhibited by anhydrotetracycline. Its function is as follows. An FAD-requiring monooxygenase active on some tetracycline antibiotic derivatives, which leads to their inactivation. Hydroxylates carbon 11a of tetracycline and some analogs. Confers resistance to tetracycline and doxycycline via an oxidoreductase activity; probably monooxygenates the antibiotics. Does not act on tigecycline. This chain is Flavin-dependent monooxygenase, found in Mycobacteroides abscessus (strain ATCC 19977 / DSM 44196 / CCUG 20993 / CIP 104536 / JCM 13569 / NCTC 13031 / TMC 1543 / L948) (Mycobacterium abscessus).